A 750-amino-acid chain; its full sequence is Ribosomal RNA large subunit methyltransferase K/L (750 aa).

Residues 46–157 enclose the THUMP domain; it reads TAYRLCLWSR…RGEAILSLDL (112 aa).

It belongs to the methyltransferase superfamily. RlmKL family.

It is found in the cytoplasm. The catalysed reaction is guanosine(2445) in 23S rRNA + S-adenosyl-L-methionine = N(2)-methylguanosine(2445) in 23S rRNA + S-adenosyl-L-homocysteine + H(+). It catalyses the reaction guanosine(2069) in 23S rRNA + S-adenosyl-L-methionine = N(2)-methylguanosine(2069) in 23S rRNA + S-adenosyl-L-homocysteine + H(+). In terms of biological role, specifically methylates the guanine in position 2445 (m2G2445) and the guanine in position 2069 (m7G2069) of 23S rRNA. In Pseudomonas syringae pv. tomato (strain ATCC BAA-871 / DC3000), this protein is Ribosomal RNA large subunit methyltransferase K/L.